Consider the following 663-residue polypeptide: UvrABC system protein B (663 aa).

A compositionally biased stretch (basic and acidic residues) spans 1-10 (MIDKRDDKPF). Positions 1-23 (MIDKRDDKPFKLKSKYKPSGDQP) are disordered. In terms of domain architecture, Helicase ATP-binding spans 31-418 (DNIEGGEKAQ…TNTIIEQIIR (388 aa)). 44-51 (GATGTGKT) serves as a coordination point for ATP. The Beta-hairpin motif lies at 97–120 (YYDYYQPEAYVPSSDTYIEKDSSV). In terms of domain architecture, Helicase C-terminal spans 435-601 (QMDDLLGEIN…TIKKDIRGLI (167 aa)). The region spanning 627–662 (KEAINALQKQMQEAAELLDFELAAQMRDLILELKLM) is the UVR domain.

Belongs to the UvrB family. As to quaternary structure, forms a heterotetramer with UvrA during the search for lesions. Interacts with UvrC in an incision complex.

The protein localises to the cytoplasm. Functionally, the UvrABC repair system catalyzes the recognition and processing of DNA lesions. A damage recognition complex composed of 2 UvrA and 2 UvrB subunits scans DNA for abnormalities. Upon binding of the UvrA(2)B(2) complex to a putative damaged site, the DNA wraps around one UvrB monomer. DNA wrap is dependent on ATP binding by UvrB and probably causes local melting of the DNA helix, facilitating insertion of UvrB beta-hairpin between the DNA strands. Then UvrB probes one DNA strand for the presence of a lesion. If a lesion is found the UvrA subunits dissociate and the UvrB-DNA preincision complex is formed. This complex is subsequently bound by UvrC and the second UvrB is released. If no lesion is found, the DNA wraps around the other UvrB subunit that will check the other stand for damage. The chain is UvrABC system protein B from Streptococcus pyogenes serotype M3 (strain ATCC BAA-595 / MGAS315).